A 91-amino-acid chain; its full sequence is SCSRKGPKFVEYKYMAGSAQYCEHKNMKFMIGSNFIDFDDCTRCTCYNHGLQCCGIGANAGVFGVPGCEAVNDHCELVFLKKNTDQLCFIN.

Cystine bridges form between cysteine 2–cysteine 54, cysteine 22–cysteine 46, cysteine 41–cysteine 75, cysteine 44–cysteine 53, and cysteine 68–cysteine 88.

As to expression, expressed in ciliated epithelium of nidamental gland and in secretory-like cells in accessory nidamental gland (at protein level). Expressed in ovary, nidamental gland and accessory nidamental gland.

The protein localises to the secreted. Its function is as follows. Acts as a pheromone. Triggers aggressive behaviors in males such as fin beating, lunging and grabbing. These behaviors form part of the competition for fertile females. The protein is Beta-microseminoprotein of Doryteuthis pealeii (Longfin inshore squid).